The chain runs to 143 residues: Submaxillary gland androgen-regulated protein 2, isoform gamma (143 aa).

Positions 1 to 22 (MKALYMVFVLWVLIGCFLSSEC) are cleaved as a signal peptide. Residues 28 to 50 (GQHDPTRPLSPSNPSSHFYPQPD) form a disordered region. Residues 36–45 (LSPSNPSSHF) show a composition bias toward polar residues.

The protein resides in the secreted. Functionally, may play a role in protection or detoxification. This is Submaxillary gland androgen-regulated protein 2, isoform gamma (Smr2) from Mus musculus (Mouse).